The primary structure comprises 669 residues: Filensin (669 aa).

A head region spans residues 1 to 33; that stretch reads MYRRSYVFQARQERYERAQPAGPAAQPGGTAPG. Position 5 is a phosphoserine (serine 5). In terms of domain architecture, IF rod spans 33–318; that stretch reads GLAALQALGE…RIIEIEGSRL (286 aa). The coil 1A stretch occupies residues 34–68; that stretch reads LAALQALGERVAVQVQRARALQQRHAGLRRQLDAF. Alanine 35 is modified (N-acetylalanine). Residues 69-77 form a linker 1 region; that stretch reads QRLGEQPGP. Residues 78 to 177 are coil 1B; it reads EDALARHVEA…RYKKNLLEIQ (100 aa). The interval 178-194 is linker 12; that stretch reads TYITVLQQIVQTAPQVS. Residues 195–318 are coil 2; the sequence is LVTGMRESGL…RIIEIEGSRL (124 aa). A tail region spans residues 319-669; it reads SSVFIETPIS…GEKSLPDTRA (351 aa). Serine 339 carries the phosphoserine modification. Disordered regions lie at residues 380-435, 449-468, and 505-618; these read VEET…GGQI, RVSG…FTKG, and HHDG…KALS. Residues 408–417 are compositionally biased toward gly residues; the sequence is SQPGAGGGHG. The N-myristoyl glycine moiety is linked to residue glycine 432. Residue serine 513 is modified to Phosphoserine. The segment covering 545–570 has biased composition (basic and acidic residues); the sequence is NGLRAKEPKDLEEKDDDGKKEAEGSR. Residues 583-593 are compositionally biased toward polar residues; the sequence is PSTSHSQTSGS. Threonine 585 is modified (phosphothreonine).

This sequence belongs to the intermediate filament family. Part of a complex required for lens intermediate filament formation composed of BFSP1, BFSP2 and CRYAA. Identified in a complex that contains VIM, EZR, AHNAK, BFSP1, BFSP2, ANK2, PLEC, PRX and spectrin. Found in a complex composed of PPL (via C-terminal linker domain), BFSP1 and BFSP2 in the retinal lens. Within the complex interacts with BFSP2. Interacts (via C-terminus) with MIP (via C-terminus) in aged lens fiber cells. Post-translationally, proteolytically cleaved during lens cell fiber differentiation with increased fragmentation as fiber cell age increases. In terms of processing, myristoylated at Gly-432 following proteolytic cleavage at Asp-431. Acetylated at Ala-35 following proteolytic cleavage at Leu-34. As to expression, detected in eye lens fiber cells (at protein level). Expressed in retinal lens epithelial cells (at protein level).

Its subcellular location is the cell membrane. The protein localises to the cytoplasm. The protein resides in the cytoskeleton. It localises to the cell cortex. In terms of biological role, required for the correct formation of lens intermediate filaments as part of a complex composed of BFSP1, BFSP2 and CRYAA. Involved in altering the calcium regulation of MIP water permeability. This chain is Filensin (Bfsp1), found in Mus musculus (Mouse).